The primary structure comprises 532 residues: ATP synthase subunit alpha (532 aa).

171–178 (GDRQTGKT) is an ATP binding site.

Belongs to the ATPase alpha/beta chains family. As to quaternary structure, F-type ATPases have 2 components, CF(1) - the catalytic core - and CF(0) - the membrane proton channel. CF(1) has five subunits: alpha(3), beta(3), gamma(1), delta(1), epsilon(1). CF(0) has three main subunits: a(1), b(2) and c(9-12). The alpha and beta chains form an alternating ring which encloses part of the gamma chain. CF(1) is attached to CF(0) by a central stalk formed by the gamma and epsilon chains, while a peripheral stalk is formed by the delta and b chains.

The protein resides in the cell membrane. It catalyses the reaction ATP + H2O + 4 H(+)(in) = ADP + phosphate + 5 H(+)(out). Functionally, produces ATP from ADP in the presence of a proton gradient across the membrane. The alpha chain is a regulatory subunit. The sequence is that of ATP synthase subunit alpha from Amoebophilus asiaticus (strain 5a2).